Reading from the N-terminus, the 200-residue chain is NADH-quinone oxidoreductase subunit C (200 aa).

The protein belongs to the complex I 30 kDa subunit family. As to quaternary structure, NDH-1 is composed of 14 different subunits. Subunits NuoB, C, D, E, F, and G constitute the peripheral sector of the complex.

It is found in the cell inner membrane. It catalyses the reaction a quinone + NADH + 5 H(+)(in) = a quinol + NAD(+) + 4 H(+)(out). Functionally, NDH-1 shuttles electrons from NADH, via FMN and iron-sulfur (Fe-S) centers, to quinones in the respiratory chain. The immediate electron acceptor for the enzyme in this species is believed to be ubiquinone. Couples the redox reaction to proton translocation (for every two electrons transferred, four hydrogen ions are translocated across the cytoplasmic membrane), and thus conserves the redox energy in a proton gradient. In Rhizobium rhizogenes (strain K84 / ATCC BAA-868) (Agrobacterium radiobacter), this protein is NADH-quinone oxidoreductase subunit C.